We begin with the raw amino-acid sequence, 461 residues long: Anthocyanidin 3-O-glucoside 5-O-glucosyltransferase (461 aa).

Positions 1 to 15 (MSRAHVLLATFPAQG) are cleaved as a signal peptide. Residue His16 is the Proton acceptor of the active site. An an anthocyanidin-binding site is contributed by His16. UDP-alpha-D-glucose-binding residues include Gln338, His353, Trp356, Asn357, Ser358, Glu361, Asp377, and Gln378.

It belongs to the UDP-glycosyltransferase family.

It carries out the reaction an anthocyanidin 3-O-beta-D-glucoside + UDP-alpha-D-glucose = an anthocyanidin 3,5-di-O-beta-D-glucoside + UDP + 2 H(+). It functions in the pathway pigment biosynthesis; anthocyanin biosynthesis. Its function is as follows. Catalyzes the glucosylation at the O-5 position of anthocyanidin 3-glucosides to form anthocyanidin 3,5-di-O-glucosides using UDP-glucose as sugar donor. Anthocyanidin 3,5-di-O-glucosides are molecules that are responsible for pigmentation. Also acts on anthocyanidin 3-O-(6-O-malonylglucoside). Much less active with hydroxycinnamoylglucose derivatives. No activity in the absence of the 3-O-glucoside group. This is Anthocyanidin 3-O-glucoside 5-O-glucosyltransferase (HGT8) from Verbena hybrida (Garden vervain).